Reading from the N-terminus, the 198-residue chain is Remorin (198 aa).

Over residues 1 to 11 the composition is skewed to basic and acidic residues; it reads MAELEAKKVEI. The disordered stretch occupies residues 1–24; sequence MAELEAKKVEIVDPAPPAPGPVEA. Residues 97 to 184 adopt a coiled-coil conformation; that stretch reads EESEKSKAEN…LKAEELAAKY (88 aa).

The protein belongs to the remorin family. The N-terminus is blocked. In terms of processing, phosphorylated.

It is found in the cell membrane. Functionally, binds to both simple and complex galacturonides. May be involved in cell-to-cell signaling and molecular transport. This Solanum tuberosum (Potato) protein is Remorin.